An 89-amino-acid chain; its full sequence is MALLDFFLSRKKTTANIAKERLQIIVAERRRGDNEPHYLPQLKRDILEVICRYVQIDPEMVTVQLEQKGDDISVLELNVTLPEAEETPK.

Belongs to the MinE family.

Its function is as follows. Prevents the cell division inhibition by proteins MinC and MinD at internal division sites while permitting inhibition at polar sites. This ensures cell division at the proper site by restricting the formation of a division septum at the midpoint of the long axis of the cell. The protein is Cell division topological specificity factor of Pectobacterium atrosepticum (strain SCRI 1043 / ATCC BAA-672) (Erwinia carotovora subsp. atroseptica).